The chain runs to 428 residues: ATP-dependent RNA helicase RhlB (428 aa).

A Q motif motif is present at residues 9 to 37 (QKFSDFALHPLVVEALENKGFQYCTPIQA). The 180-residue stretch at 40–219 (LPLTLSGRDV…FEQMNNAEYV (180 aa)) folds into the Helicase ATP-binding domain. 53–60 (AQTGTGKT) contacts ATP. Positions 165-168 (DEAD) match the DEAD box motif. The Helicase C-terminal domain occupies 245 to 390 (RLLQTLIEEE…VSKYNSDALL (146 aa)). The interval 394–428 (PAPKRLARTRTGNGPRRNSAPRRSGAPRNNRKRPG) is disordered.

It belongs to the DEAD box helicase family. RhlB subfamily. Component of the RNA degradosome, which is a multiprotein complex involved in RNA processing and mRNA degradation.

Its subcellular location is the cytoplasm. It catalyses the reaction ATP + H2O = ADP + phosphate + H(+). Functionally, DEAD-box RNA helicase involved in RNA degradation. Has RNA-dependent ATPase activity and unwinds double-stranded RNA. This is ATP-dependent RNA helicase RhlB from Yersinia pseudotuberculosis serotype O:1b (strain IP 31758).